We begin with the raw amino-acid sequence, 341 residues long: Arfaptin-2 (341 aa).

Residues 46–85 (NETSIVSGGYGGSGDGLIPTGSGRHPSHSTTPSGPGDEVA) form a disordered region. Phosphoserine is present on S72. The residue at position 76 (T76) is a Phosphothreonine. The region spanning 121 to 321 (TVDLELELQI…NQKQLEQTLQ (201 aa)) is the AH domain.

Forms homodimers or heterodimers with ARFIP1. Interacts with RAC1. Specifically binds to GTP-bound ARF1 and ARF6, but binds to RAC1.GTP and RAC1.GDP with similar affinities. Interacts with ARL1. Interacts (via N-terminus) with IKBKB and IKBKG; these interactions inhibit activation of NF-kappa-B.

Its subcellular location is the golgi apparatus. The protein localises to the trans-Golgi network membrane. Functionally, plays a role in constitutive metalloproteinase (MMP) secretion from the trans Golgi network. May have important functions during vesicle biogenesis at certain cargo subdomains, which could be predominantly utilized by secreted MMPs, such as MMP7 and MMP2. Also involved in autophagy by regulating the starvation-dependent trafficking of ATG9A vesicles which deliver the phosphatidylinositol 4-kinase beta (PI4KB) to the autophagosome initiation site. Involved in phagophore growth during mitophagy by regulating ATG9A trafficking to mitochondria. In addition, plays a role in NF-kappa-B inhibition by interacting with IKBKB and IKBKG. This chain is Arfaptin-2, found in Homo sapiens (Human).